The sequence spans 220 residues: Thiamine-phosphate synthase (220 aa).

4-amino-2-methyl-5-(diphosphooxymethyl)pyrimidine-binding positions include 39-43 (QLRDK) and Asn-80. 2 residues coordinate Mg(2+): Asp-81 and Asp-100. A 4-amino-2-methyl-5-(diphosphooxymethyl)pyrimidine-binding site is contributed by Ser-119. 145–147 (TPT) contributes to the 2-[(2R,5Z)-2-carboxy-4-methylthiazol-5(2H)-ylidene]ethyl phosphate binding site. Lys-148 lines the 4-amino-2-methyl-5-(diphosphooxymethyl)pyrimidine pocket. Gly-176 serves as a coordination point for 2-[(2R,5Z)-2-carboxy-4-methylthiazol-5(2H)-ylidene]ethyl phosphate.

It belongs to the thiamine-phosphate synthase family. It depends on Mg(2+) as a cofactor.

It carries out the reaction 2-[(2R,5Z)-2-carboxy-4-methylthiazol-5(2H)-ylidene]ethyl phosphate + 4-amino-2-methyl-5-(diphosphooxymethyl)pyrimidine + 2 H(+) = thiamine phosphate + CO2 + diphosphate. The enzyme catalyses 2-(2-carboxy-4-methylthiazol-5-yl)ethyl phosphate + 4-amino-2-methyl-5-(diphosphooxymethyl)pyrimidine + 2 H(+) = thiamine phosphate + CO2 + diphosphate. The catalysed reaction is 4-methyl-5-(2-phosphooxyethyl)-thiazole + 4-amino-2-methyl-5-(diphosphooxymethyl)pyrimidine + H(+) = thiamine phosphate + diphosphate. It functions in the pathway cofactor biosynthesis; thiamine diphosphate biosynthesis; thiamine phosphate from 4-amino-2-methyl-5-diphosphomethylpyrimidine and 4-methyl-5-(2-phosphoethyl)-thiazole: step 1/1. Functionally, condenses 4-methyl-5-(beta-hydroxyethyl)thiazole monophosphate (THZ-P) and 2-methyl-4-amino-5-hydroxymethyl pyrimidine pyrophosphate (HMP-PP) to form thiamine monophosphate (TMP). The sequence is that of Thiamine-phosphate synthase from Mycobacterium ulcerans (strain Agy99).